The following is a 187-amino-acid chain: Nuclear transcription factor Y subunit C-8 (187 aa).

Positions 163-187 (WPGAWTSVSGEEEEARGKKGGDDGN) are disordered. The span at 177–187 (ARGKKGGDDGN) shows a compositional bias: basic and acidic residues.

It belongs to the NFYC/HAP5 subunit family. As to quaternary structure, heterotrimeric transcription factor composed of three components, NF-YA, NF-YB and NF-YC. NF-YB and NF-YC must interact and dimerize for NF-YA association and DNA binding. As to expression, expressed in flowers and siliques.

Its subcellular location is the nucleus. Its function is as follows. Stimulates the transcription of various genes by recognizing and binding to a CCAAT motif in promoters. This Arabidopsis thaliana (Mouse-ear cress) protein is Nuclear transcription factor Y subunit C-8 (NFYC8).